Reading from the N-terminus, the 209-residue chain is Probable glutathione peroxidase 8-A (209 aa).

A helical membrane pass occupies residues Val18–Leu40. Cys79 is a catalytic residue.

It belongs to the glutathione peroxidase family.

The protein localises to the membrane. The enzyme catalyses 2 glutathione + H2O2 = glutathione disulfide + 2 H2O. The sequence is that of Probable glutathione peroxidase 8-A (gpx8-a) from Xenopus laevis (African clawed frog).